The chain runs to 323 residues: Sphingolipid delta(4)-desaturase DES1 (323 aa).

The N-myristoyl glycine moiety is linked to residue glycine 2. The next 2 helical transmembrane spans lie at 41-61 and 68-88; these read SNLI…FYLV and WVLF…TLAI. The short motif at 89–93 is the Histidine box-1 element; that stretch reads HEVSH. A helical transmembrane segment spans residues 102-122; that stretch reads AMWNRWFGIFANLPIGVPYSV. The Histidine box-2 signature appears at 128–132; sequence HMDHH. The next 3 helical transmembrane spans lie at 152–172, 184–204, and 209–229; these read FFCT…FYAF, YLEI…YYVL, and LVYM…SGHF. The Histidine box-3 motif lies at 259 to 263; that stretch reads HNEHH. Residue serine 307 is modified to Phosphoserine.

Belongs to the fatty acid desaturase type 1 family. DEGS subfamily. As to quaternary structure, interacts with RLBP1; the interaction increases synthesis of chromophore-precursors by DEGS1. Post-translationally, myristoylation can target the enzyme to the mitochondria leading to an increase in ceramide levels.

It is found in the mitochondrion membrane. The protein resides in the endoplasmic reticulum membrane. The enzyme catalyses an N-acylsphinganine + 2 Fe(II)-[cytochrome b5] + O2 + 2 H(+) = an N-acylsphing-4-enine + 2 Fe(III)-[cytochrome b5] + 2 H2O. It carries out the reaction all-trans-retinol = 11-cis-retinol. It catalyses the reaction all-trans-retinol = 9-cis-retinol. The catalysed reaction is all-trans-retinol = 13-cis-retinol. The enzyme catalyses 11-cis-retinol = 13-cis-retinol. It carries out the reaction 11-cis-retinol = 9-cis-retinol. Functionally, has sphingolipid-delta-4-desaturase activity. Converts D-erythro-sphinganine to D-erythro-sphingosine (E-sphing-4-enine). Catalyzes the equilibrium isomerization of retinols. This chain is Sphingolipid delta(4)-desaturase DES1 (DEGS1), found in Bos taurus (Bovine).